The chain runs to 795 residues: Phenylalanine--tRNA ligase beta subunit (795 aa).

The tRNA-binding domain maps to 39–148; sequence AGTFNGVVVG…LDAPIGTDLR (110 aa). One can recognise a B5 domain in the interval 401–476; the sequence is PKVNTVQLRR…RIYGYNSIPN (76 aa). Residues aspartate 454, aspartate 460, glutamate 463, and glutamate 464 each contribute to the Mg(2+) site. Residues 701–794 form the FDX-ACB domain; the sequence is SKFPANRRDL…VKQRFNAELR (94 aa).

The protein belongs to the phenylalanyl-tRNA synthetase beta subunit family. Type 1 subfamily. In terms of assembly, tetramer of two alpha and two beta subunits. Mg(2+) serves as cofactor.

The protein localises to the cytoplasm. It carries out the reaction tRNA(Phe) + L-phenylalanine + ATP = L-phenylalanyl-tRNA(Phe) + AMP + diphosphate + H(+). This is Phenylalanine--tRNA ligase beta subunit (pheT) from Haemophilus influenzae (strain ATCC 51907 / DSM 11121 / KW20 / Rd).